The chain runs to 170 residues: ATP synthase subunit b (170 aa).

The helical transmembrane segment at 30–50 (FFFVLAIFLVVLAVIGTFVVP) threads the bilayer.

Belongs to the ATPase B chain family. As to quaternary structure, F-type ATPases have 2 components, F(1) - the catalytic core - and F(0) - the membrane proton channel. F(1) has five subunits: alpha(3), beta(3), gamma(1), delta(1), epsilon(1). F(0) has three main subunits: a(1), b(2) and c(10-14). The alpha and beta chains form an alternating ring which encloses part of the gamma chain. F(1) is attached to F(0) by a central stalk formed by the gamma and epsilon chains, while a peripheral stalk is formed by the delta and b chains.

It localises to the cell membrane. In terms of biological role, f(1)F(0) ATP synthase produces ATP from ADP in the presence of a proton or sodium gradient. F-type ATPases consist of two structural domains, F(1) containing the extramembraneous catalytic core and F(0) containing the membrane proton channel, linked together by a central stalk and a peripheral stalk. During catalysis, ATP synthesis in the catalytic domain of F(1) is coupled via a rotary mechanism of the central stalk subunits to proton translocation. Functionally, component of the F(0) channel, it forms part of the peripheral stalk, linking F(1) to F(0). The protein is ATP synthase subunit b of Mycobacterium ulcerans (strain Agy99).